A 370-amino-acid polypeptide reads, in one-letter code: MKIDAIEAVIVDVPTKRPIQMSITTVHQQSYVIVRVYSEGLVGVGEGGSVGGPVWSAECAETIKIIVERYLAPHLLGTDAFNVSGALQTMARAVTGNASAKAAVEMALLDLKARALGVSIAELLGGPLRSAIPIAWTLASGDTKRDLDSAVEMIERRRHNRFKVKLGFRSPQDDLIHMEALSNSLGSKAYLRVDVNQAWDEQVASVYIPELEALGVELIEQPVGRENTQALRRLSDNNRVAIMADESLSTLASAFDLARDRSVDVFSLKLCNMGGVSATQKIAAVAEASGIASYGGTMLDSTIGTSVALQLYSTVPSLPFGCELIGPFVLADTLSHEPLEIRDYELQVPTGVGHGMTLDEDKVRQYARVS.

K165 functions as the Proton acceptor in the catalytic mechanism. Residues D194, E220, and D245 each contribute to the Mn(2+) site. E323 (proton donor) is an active-site residue.

It belongs to the mandelate racemase/muconate lactonizing enzyme family. Requires Mn(2+) as cofactor.

The catalysed reaction is 2-[(2R)-2-chloro-2,5-dihydro-5-oxofuryl]acetate = 3-chloro-cis,cis-muconate + H(+). The protein operates within aromatic compound metabolism; 3-chlorocatechol degradation. The chain is Chloromuconate cycloisomerase (tfdDI) from Cupriavidus pinatubonensis (strain JMP 134 / LMG 1197) (Cupriavidus necator (strain JMP 134)).